The following is a 767-amino-acid chain: Transient receptor potential cation channel subfamily V member 6 (767 aa).

Residues Met1 to Pro33 are disordered. At Met1–Pro366 the chain is on the cytoplasmic side. ANK repeat units follow at residues Ile84 to Gln114, Met118 to Phe147, and Glu156 to Ala185. Residues Glu133–Pro143 form an interaction with calmodulin region. Residues Tyr201 and Tyr202 each carry the phosphotyrosine; by SRC modification. 3 ANK repeats span residues Tyr202–Ala231, Leu235–Asn276, and Gln278–Trp307. A helical membrane pass occupies residues Tyr367 to Val387. Topologically, residues Tyr388 to Arg424 are extracellular. Asn397 is a glycosylation site (N-linked (GlcNAc...) asparagine). Residues Leu425–Phe447 form a helical membrane-spanning segment. The Cytoplasmic portion of the chain corresponds to Arg448 to Gly462. The helical transmembrane segment at Pro463 to Arg482 threads the bilayer. Residues Leu483 to Gly488 lie on the Extracellular side of the membrane. The helical transmembrane segment at Glu489–Ala508 threads the bilayer. Topologically, residues Arg509–Asp528 are cytoplasmic. A helical membrane pass occupies residues Leu529–Phe551. The Extracellular segment spans residues Gln552–Asp564. The pore-forming intramembrane region spans Tyr565–Ala584. The Selectivity filter motif lies at Ile580 to Ala584. Asp581 is a binding site for Ca(2+). At Asn585–Ser595 the chain is on the extracellular side. A helical transmembrane segment spans residues Ile596–Met616. Topologically, residues Met617–Ile767 are cytoplasmic. An interaction with S100A10 region spans residues Val637–Val641. Positions Ala689 to Glu707 are interaction with calmodulin.

It belongs to the transient receptor (TC 1.A.4) family. TrpV subfamily. TRPV6 sub-subfamily. As to quaternary structure, homotetramer. Probably also forms heterotetramers with TRPV5. Interacts with TRPV5. Interacts with S100A10 and probably with the ANAX2-S100A10 heterotetramer. The interaction with S100A10 is required for the trafficking to the plasma membrane. Interacts with calmodulin. Interacts with BSPRY. Interacts with TCAF1 and TCAF2. Post-translationally, glycosylated. Phosphorylation at Tyr-201 and Tyr-202 by SRC leads to an increased calcium influx through the channel. Probably dephosphorylated at these sites by PTPN1. As to expression, expressed in duodenum, proximal jejunum, cecum, and colon.

The protein localises to the cell membrane. It carries out the reaction Ca(2+)(in) = Ca(2+)(out). Calcium selective cation channel that mediates Ca(2+) uptake in various tissues, including the intestine. Important for normal Ca(2+) ion homeostasis in the body, including bone and skin. The channel is activated by low internal calcium level, probably including intracellular calcium store depletion, and the current exhibits an inward rectification. Inactivation includes both a rapid Ca(2+)-dependent and a slower Ca(2+)-calmodulin-dependent mechanism; the latter may be regulated by phosphorylation. In vitro, is slowly inhibited by Mg(2+) in a voltage-independent manner. Heteromeric assembly with TRPV5 seems to modify channel properties. TRPV5-TRPV6 heteromultimeric concatemers exhibit voltage-dependent gating. The polypeptide is Transient receptor potential cation channel subfamily V member 6 (Trpv6) (Rattus norvegicus (Rat)).